The sequence spans 431 residues: Enolase (431 aa).

Gln-166 is a (2R)-2-phosphoglycerate binding site. Catalysis depends on Glu-208, which acts as the Proton donor. Residues Asp-245, Glu-288, and Asp-315 each contribute to the Mg(2+) site. (2R)-2-phosphoglycerate is bound by residues Lys-340, Arg-369, Ser-370, and Lys-391. The Proton acceptor role is filled by Lys-340.

It belongs to the enolase family. It depends on Mg(2+) as a cofactor.

Its subcellular location is the cytoplasm. The protein localises to the secreted. The protein resides in the cell surface. The catalysed reaction is (2R)-2-phosphoglycerate = phosphoenolpyruvate + H2O. It participates in carbohydrate degradation; glycolysis; pyruvate from D-glyceraldehyde 3-phosphate: step 4/5. Its function is as follows. Catalyzes the reversible conversion of 2-phosphoglycerate (2-PG) into phosphoenolpyruvate (PEP). It is essential for the degradation of carbohydrates via glycolysis. The polypeptide is Enolase (Clostridium perfringens (strain ATCC 13124 / DSM 756 / JCM 1290 / NCIMB 6125 / NCTC 8237 / Type A)).